A 245-amino-acid polypeptide reads, in one-letter code: Ribonuclease PH (245 aa).

Phosphate is bound by residues arginine 86 and 124–126; that span reads GTR.

The protein belongs to the RNase PH family. In terms of assembly, homohexameric ring arranged as a trimer of dimers.

The enzyme catalyses tRNA(n+1) + phosphate = tRNA(n) + a ribonucleoside 5'-diphosphate. In terms of biological role, phosphorolytic 3'-5' exoribonuclease that plays an important role in tRNA 3'-end maturation. Removes nucleotide residues following the 3'-CCA terminus of tRNAs; can also add nucleotides to the ends of RNA molecules by using nucleoside diphosphates as substrates, but this may not be physiologically important. Probably plays a role in initiation of 16S rRNA degradation (leading to ribosome degradation) during starvation. This Bacillus cytotoxicus (strain DSM 22905 / CIP 110041 / 391-98 / NVH 391-98) protein is Ribonuclease PH.